The sequence spans 655 residues: p-hydroxybenzoic acid efflux pump subunit AaeB (655 aa).

A run of 11 helical transmembrane segments spans residues 13-33 (FAVKLATAIVLALFVGFHFQL), 38-58 (WAVLTAAIVAAGPAFAAGGEP), 69-89 (LRIIGTFIGCIAGLVIIIAMI), 93-113 (LLMILVCCIWAGFCTWISSLV), 121-141 (WGLAGYTALIIVITIQPEPLL), 152-172 (EIVIGIVCAIIADLLFSPRSI), 370-390 (LFWLWTGWTSGSGAMVMIAVV), 407-427 (FIYGTLAALPLGLLYFLVIIP), 431-451 (QSMLLLCISLAVLGFFLGIEV), 455-475 (LLGSMGALASTINIIVLDNPM), and 482-502 (FLDSALGQIVGCVLAFTVILL).

Belongs to the aromatic acid exporter ArAE (TC 2.A.85) family.

The protein resides in the cell inner membrane. Functionally, forms an efflux pump with AaeA. Could function as a metabolic relief valve, allowing to eliminate certain compounds when they accumulate to high levels in the cell. In Shigella boydii serotype 4 (strain Sb227), this protein is p-hydroxybenzoic acid efflux pump subunit AaeB.